The chain runs to 460 residues: Chromosomal replication initiator protein DnaA (460 aa).

The segment at 1 to 83 (MENIWLEAQT…EFHVADEKPE (83 aa)) is domain I, interacts with DnaA modulators. A compositionally biased stretch (basic and acidic residues) spans 78-121 (ADEKPEAAPEEKPEKEGKPAREKEKDKDKEKEKDREKEKDKKEL). A disordered region spans residues 78–122 (ADEKPEAAPEEKPEKEGKPAREKEKDKDKEKEKDREKEKDKKELV). The domain II stretch occupies residues 83 to 123 (EAAPEEKPEKEGKPAREKEKDKDKEKEKDREKEKDKKELVP). The tract at residues 124-340 (NLNPKYTFES…GMLIRLEAFA (217 aa)) is domain III, AAA+ region. Residues Gly-168, Gly-170, Lys-171, and Thr-172 each coordinate ATP. The segment at 341 to 460 (SLTGQEITLS…VEDIRKKLFT (120 aa)) is domain IV, binds dsDNA.

Belongs to the DnaA family. As to quaternary structure, oligomerizes as a right-handed, spiral filament on DNA at oriC.

It localises to the cytoplasm. Its function is as follows. Plays an essential role in the initiation and regulation of chromosomal replication. ATP-DnaA binds to the origin of replication (oriC) to initiate formation of the DNA replication initiation complex once per cell cycle. Binds the DnaA box (a 9 base pair repeat at the origin) and separates the double-stranded (ds)DNA. Forms a right-handed helical filament on oriC DNA; dsDNA binds to the exterior of the filament while single-stranded (ss)DNA is stabiized in the filament's interior. The ATP-DnaA-oriC complex binds and stabilizes one strand of the AT-rich DNA unwinding element (DUE), permitting loading of DNA polymerase. After initiation quickly degrades to an ADP-DnaA complex that is not apt for DNA replication. Binds acidic phospholipids. The polypeptide is Chromosomal replication initiator protein DnaA (Geobacter sp. (strain M21)).